The primary structure comprises 289 residues: Serine/threonine-protein phosphatase Pgam5, mitochondrial (289 aa).

Belongs to the phosphoglycerate mutase family. BPG-dependent PGAM subfamily. As to quaternary structure, interacts with Pk92B/ASK1.

It is found in the mitochondrion outer membrane. It catalyses the reaction O-phospho-L-seryl-[protein] + H2O = L-seryl-[protein] + phosphate. It carries out the reaction O-phospho-L-threonyl-[protein] + H2O = L-threonyl-[protein] + phosphate. Its function is as follows. Displays phosphatase activity for serine/threonine residues, and dephosphorylates and activates Pk92B kinase. Has apparently no phosphoglycerate mutase activity. The chain is Serine/threonine-protein phosphatase Pgam5, mitochondrial from Drosophila yakuba (Fruit fly).